The primary structure comprises 455 residues: Adenylyltransferase and sulfurtransferase MOCS3 (455 aa).

Residues Gly-90, Asp-111, 118–122, Lys-135, and 179–180 each bind ATP; these read SNLAR and DN. The interaction with NFS1 stretch occupies residues 156–236; it reads AQALTPATAL…RPPPAETVTS (81 aa). Residues Cys-220 and Cys-223 each coordinate Zn(2+). Cys-237 acts as the Glycyl thioester intermediate; for adenylyltransferase activity in catalysis. 2 residues coordinate Zn(2+): Cys-295 and Cys-298. A disulfide bridge connects residues Cys-314 and Cys-322. The region spanning 345–453 is the Rhodanese domain; sequence SRSPHLLLDV…WAAKIDGTFP (109 aa). The active-site Cysteine persulfide intermediate; for sulfurtransferase activity is the Cys-410. Cys-410 carries the post-translational modification Cysteine persulfide.

It in the N-terminal section; belongs to the HesA/MoeB/ThiF family. UBA4 subfamily. As to quaternary structure, interacts with NFS1. The cofactor is Zn(2+).

The protein localises to the cytoplasm. It localises to the cytosol. It catalyses the reaction [molybdopterin-synthase sulfur-carrier protein]-C-terminal Gly-Gly + ATP + H(+) = [molybdopterin-synthase sulfur-carrier protein]-C-terminal Gly-Gly-AMP + diphosphate. The catalysed reaction is [molybdopterin-synthase sulfur-carrier protein]-C-terminal Gly-Gly-AMP + S-sulfanyl-L-cysteinyl-[cysteine desulfurase] + AH2 = [molybdopterin-synthase sulfur-carrier protein]-C-terminal-Gly-aminoethanethioate + L-cysteinyl-[cysteine desulfurase] + A + AMP + 2 H(+). It participates in tRNA modification; 5-methoxycarbonylmethyl-2-thiouridine-tRNA biosynthesis. It functions in the pathway cofactor biosynthesis; molybdopterin biosynthesis. In terms of biological role, plays a central role in 2-thiolation of mcm(5)S(2)U at tRNA wobble positions of cytosolic tRNA(Lys), tRNA(Glu) and tRNA(Gln). Also essential during biosynthesis of the molybdenum cofactor. Acts by mediating the C-terminal thiocarboxylation of sulfur carriers URM1 and MOCS2A. Its N-terminus first activates URM1 and MOCS2A as acyl-adenylates (-COAMP), then the persulfide sulfur on the catalytic cysteine is transferred to URM1 and MOCS2A to form thiocarboxylation (-COSH) of their C-terminus. The reaction probably involves hydrogen sulfide that is generated from the persulfide intermediate and that acts as a nucleophile towards URM1 and MOCS2A. Subsequently, a transient disulfide bond is formed. Does not use thiosulfate as sulfur donor; NFS1 acting as a sulfur donor for thiocarboxylation reactions. In Bos taurus (Bovine), this protein is Adenylyltransferase and sulfurtransferase MOCS3.